A 163-amino-acid chain; its full sequence is 3-hydroxyacyl-[acyl-carrier-protein] dehydratase FabZ (163 aa).

The active site involves His-64.

This sequence belongs to the thioester dehydratase family. FabZ subfamily.

It is found in the cytoplasm. The catalysed reaction is a (3R)-hydroxyacyl-[ACP] = a (2E)-enoyl-[ACP] + H2O. Functionally, involved in unsaturated fatty acids biosynthesis. Catalyzes the dehydration of short chain beta-hydroxyacyl-ACPs and long chain saturated and unsaturated beta-hydroxyacyl-ACPs. In Caulobacter sp. (strain K31), this protein is 3-hydroxyacyl-[acyl-carrier-protein] dehydratase FabZ.